Here is a 404-residue protein sequence, read N- to C-terminus: Glycosylated lysosomal membrane protein (404 aa).

Residues M1–G35 form the signal peptide. The Lumenal segment spans residues E36 to G370. N64, N85, N94, N133, N157, N166, N185, N228, and N331 each carry an N-linked (GlcNAc...) asparagine glycan. Residues I371–L391 traverse the membrane as a helical segment. The Cytoplasmic segment spans residues L392–N404. Residues Y400–N404 carry the Lysosomal targeting motif motif.

This sequence belongs to the GLMP family. As to quaternary structure, interacts (via lumenal domain) with lysosomal protein MFSD1; the interaction starts while both proteins are still in the endoplasmic reticulum and is required for stabilization of MFSD1 in lysosomes but has no direct effect on its targeting to lysosomes or transporter activity. Post-translationally, highly N-glycosylated. N-glycosylation is essential for GLMP stability and for MFSD1 lysosomal localization. As to expression, detected in brain, heart, liver, kidney, lung, intestine, testis and spleen. Expressed at highest levels in kidney cortex. However, another study reports highest expression levels in lung. Expressed in myoblasts with expression increasing during differentiation into myotubes.

Its subcellular location is the lysosome membrane. Functionally, required to protect lysosomal transporter MFSD1 from lysosomal proteolysis and for MFSD1 lysosomal localization. The polypeptide is Glycosylated lysosomal membrane protein (Mus musculus (Mouse)).